The chain runs to 97 residues: Co-chaperonin GroES (97 aa).

This sequence belongs to the GroES chaperonin family. In terms of assembly, heptamer of 7 subunits arranged in a ring. Interacts with the chaperonin GroEL.

The protein localises to the cytoplasm. In terms of biological role, together with the chaperonin GroEL, plays an essential role in assisting protein folding. The GroEL-GroES system forms a nano-cage that allows encapsulation of the non-native substrate proteins and provides a physical environment optimized to promote and accelerate protein folding. GroES binds to the apical surface of the GroEL ring, thereby capping the opening of the GroEL channel. In Yersinia pseudotuberculosis serotype O:1b (strain IP 31758), this protein is Co-chaperonin GroES.